The chain runs to 431 residues: Fumarylacetoacetase fahA (431 aa).

Ca(2+) is bound at residue aspartate 133. Tyrosine 135 lines the substrate pocket. The active-site Proton acceptor is histidine 140. Position 149 (arginine 149) interacts with substrate. Residues glutamate 209, glutamate 211, and aspartate 243 each coordinate Ca(2+). Aspartate 243 is a Mg(2+) binding site. Residues glutamine 250 and tyrosine 254 each coordinate substrate. 2 residues coordinate Mg(2+): lysine 263 and threonine 267. Threonine 362 contributes to the substrate binding site. Positions 362–381 are enriched in polar residues; the sequence is TISGKENQTQGSLLEQTNGK. Residues 362–382 form a disordered region; it reads TISGKENQTQGSLLEQTNGKN.

The protein belongs to the FAH family. The cofactor is Ca(2+). Mg(2+) is required as a cofactor.

It carries out the reaction 4-fumarylacetoacetate + H2O = acetoacetate + fumarate + H(+). Its pathway is amino-acid degradation; L-phenylalanine degradation; acetoacetate and fumarate from L-phenylalanine: step 6/6. Functionally, fumarylacetoacetase; part of the L-tyrosine degradation gene cluster that mediates the biosynthesis of the brownish pigment pyomelanin as an alternative melanin. The 4-hydroxyphenylpyruvate dioxygenase hppD catalyzes the conversion of 4-hydroxyphenylpyruvate to homogentisic acid (HGA). The protein hmgX is crucial for this conversion and thus, probably functions as an accessory factor to mediate specific activity of hppD. The homogentisate 1,2-dioxygenase hmgA is then involved in the cleavage of the aromatic ring of HGA and its conversion to 4-maleylacetoacetate. When hmgA activity is lowered by the cell wall integrity (CWI) signaling pathway, HGA accumulates and leads to the production of pyomelanin through benzoquinone acetic acid after oxidation and polymerization. On the opposite, in non-stress conditions, both hppD and hmgA activities are balanced and HGA is degraded into 4-maleylacetoacetate. 4-maleylacetoacetate is further converted to 4-fumarylacetoacetate by the maleylacetoacetate isomerase maiA, which is degraded into fumarate and acetoacetate by the fumarylacetoacetase fahA. This is Fumarylacetoacetase fahA from Aspergillus fumigatus (strain ATCC MYA-4609 / CBS 101355 / FGSC A1100 / Af293) (Neosartorya fumigata).